We begin with the raw amino-acid sequence, 52 residues long: Proteinase inhibitor (52 aa).

Gln-1 carries the pyrrolidone carboxylic acid modification. 4 cysteine pairs are disulfide-bonded: Cys-3–Cys-40, Cys-6–Cys-24, Cys-7–Cys-36, and Cys-13–Cys-49.

It belongs to the protease inhibitor I20 (potato type II proteinase inhibitor) family.

It localises to the secreted. This chain is Proteinase inhibitor, found in Solanum melongena (Eggplant).